Consider the following 658-residue polypeptide: MKDKFELVSKYSPQGDQPRAIEQLVAGLKKGLKHQTLLGATGTGKTFTVSNVIQEVNKPTLVMAHNKTLAGQLYSEFKEFFPNNAVEYFVSYYDYYQPEAYVPQSDTYIEKDASINDEIDKLRHSATAALFERRDVIIIASVSCIYGLGSPVEYGEMLVSLRVGMEISRDQLLRKLVDIQYDRNDIDFQRGRFRVRGDVVEIFPASRDEHCMRIEFFGDEIERIREVDALTGEIIGDREHVSIFPASHFVTRPDIMKKAIVNIKAELEDRLKVLRAENKLLEAQRLEQRTNYDIEMMEEMGYCSGIENYSRHLSLRPAGVTPYTLLDYFPDDFQIVIDESHVTMPQIRGMFNGDQARKQMLVDHGFRLPSALDNRPLRLEEFEKHINQIMFISATPGPYELEKNPDVIEQIIRPTGLLDPIVEIRPIQGQIDDLMDEINDRVEKNERVLITTLTKKMSEDLTNYLKEAGVKVQYLHSEVKTLERIEIIRDLRLGVYDVIVGINLLREGIDLPEVSLVAILDADKEGFLRSERSLIQTMGRAARNENGRVIMYADKMTDSMRNSISETERRRKIQIEYNEKHGITPKTIRKEIRGIIAATSAADEREAIKQHDLSKMSKKERDIFIEGMEHEMKEAAKALDFERAAELRDALLEIKAEG.

Positions 26–414 (AGLKKGLKHQ…PDVIEQIIRP (389 aa)) constitute a Helicase ATP-binding domain. 39–46 (GATGTGKT) contributes to the ATP binding site. Positions 92–115 (YYDYYQPEAYVPQSDTYIEKDASI) match the Beta-hairpin motif. A Helicase C-terminal domain is found at 430–592 (QIDDLMDEIN…ITPKTIRKEI (163 aa)). A UVR domain is found at 622–658 (DIFIEGMEHEMKEAAKALDFERAAELRDALLEIKAEG).

This sequence belongs to the UvrB family. As to quaternary structure, forms a heterotetramer with UvrA during the search for lesions. Interacts with UvrC in an incision complex.

Its subcellular location is the cytoplasm. The UvrABC repair system catalyzes the recognition and processing of DNA lesions. A damage recognition complex composed of 2 UvrA and 2 UvrB subunits scans DNA for abnormalities. Upon binding of the UvrA(2)B(2) complex to a putative damaged site, the DNA wraps around one UvrB monomer. DNA wrap is dependent on ATP binding by UvrB and probably causes local melting of the DNA helix, facilitating insertion of UvrB beta-hairpin between the DNA strands. Then UvrB probes one DNA strand for the presence of a lesion. If a lesion is found the UvrA subunits dissociate and the UvrB-DNA preincision complex is formed. This complex is subsequently bound by UvrC and the second UvrB is released. If no lesion is found, the DNA wraps around the other UvrB subunit that will check the other stand for damage. This chain is UvrABC system protein B, found in Listeria innocua serovar 6a (strain ATCC BAA-680 / CLIP 11262).